We begin with the raw amino-acid sequence, 124 residues long: UPF0231 protein Sputcn32_0682 (124 aa).

This sequence belongs to the UPF0231 family.

In Shewanella putrefaciens (strain CN-32 / ATCC BAA-453), this protein is UPF0231 protein Sputcn32_0682.